We begin with the raw amino-acid sequence, 286 residues long: Bifunctional protein FolD (286 aa).

Residues 165-167, Ser190, and Val231 contribute to the NADP(+) site; that span reads GRS.

The protein belongs to the tetrahydrofolate dehydrogenase/cyclohydrolase family. Homodimer.

The enzyme catalyses (6R)-5,10-methylene-5,6,7,8-tetrahydrofolate + NADP(+) = (6R)-5,10-methenyltetrahydrofolate + NADPH. The catalysed reaction is (6R)-5,10-methenyltetrahydrofolate + H2O = (6R)-10-formyltetrahydrofolate + H(+). It participates in one-carbon metabolism; tetrahydrofolate interconversion. Its function is as follows. Catalyzes the oxidation of 5,10-methylenetetrahydrofolate to 5,10-methenyltetrahydrofolate and then the hydrolysis of 5,10-methenyltetrahydrofolate to 10-formyltetrahydrofolate. In Bacillus cereus (strain B4264), this protein is Bifunctional protein FolD.